Reading from the N-terminus, the 87-residue chain is Toxin RelG (87 aa).

The protein belongs to the RelE toxin family. In terms of assembly, interacts with cognate antitoxin RelF, which neutralizes the toxin. Also interacts with non-cognate antitoxin RelB in vitro, in M.smegmatis this neutralizes the toxicity of this toxin.

Toxic component of a type II toxin-antitoxin (TA) system. Has RNase activity and preferentially cleaves at the 3'-end of purine ribonucleotides. Overexpression in M.tuberculosis or M.smegmatis inhibits colony formation in a bacteriostatic rather than bacteriocidal fashion. Its toxic effect is neutralized by coexpression with cognate antitoxin RelB2 (shown only for M.smegmatis). Overexpression also increases the number of gentamicin-tolerant and levofloxacin-tolerant persister cells. Its function is as follows. In combination with cognate antitoxin RelF represses its own promoter. Has been seen to bind DNA in complex with antitoxin RelF but not alone. This Mycobacterium tuberculosis (strain ATCC 25618 / H37Rv) protein is Toxin RelG (relG).